The following is a 309-amino-acid chain: Carbamate kinase-like protein (309 aa).

The segment at Asn125–Asn144 is disordered.

Belongs to the carbamate kinase family.

In Mycoplasma pneumoniae (strain ATCC 29342 / M129 / Subtype 1) (Mycoplasmoides pneumoniae), this protein is Carbamate kinase-like protein.